A 105-amino-acid chain; its full sequence is Small ribosomal subunit protein uS10 (105 aa).

This sequence belongs to the universal ribosomal protein uS10 family. Part of the 30S ribosomal subunit.

Involved in the binding of tRNA to the ribosomes. The chain is Small ribosomal subunit protein uS10 from Thermus thermophilus (strain ATCC BAA-163 / DSM 7039 / HB27).